A 314-amino-acid polypeptide reads, in one-letter code: Citrate/oxoglutarate carrier protein (314 aa).

Solcar repeat units lie at residues 18–100 (VSFS…EAEY), 107–199 (LNNF…VEDG), and 217–301 (EKIG…AKEF). The next 5 helical transmembrane spans lie at 23–44 (ILLG…LEVV), 77–97 (IPWA…VSAE), 111–127 (ASGI…QAYL), 178–198 (VAIR…LVED), and 218–238 (KIGA…IEVI). A DNA-binding region spans residues 246 to 259 (KEDPNRPKNLTVGK). The chain crosses the membrane as a helical span at residues 273-294 (LYRGVTPRIGLGIWQTVFMVGF).

The protein belongs to the mitochondrial carrier (TC 2.A.29) family.

The protein localises to the mitochondrion inner membrane. It is found in the mitochondrion matrix. It localises to the mitochondrion nucleoid. With respect to regulation, strongly inhibited by mersalyl, p-chloromercuribenzenesulfonate, mercuric chloride, N-ethylmaleimide, pyridoxal 5'-phosphate, bathophenanthroline, and tannic acid. Partially inhibited by alpha-cyanocinnamate and bromescol purple. Weakly inhibited by butylmalonate and phenylsuccinate. Not inhibited by 1,2,3-benzenetricarboxylate or carboxyatractyloside. Mitochondrial antiporter which catalyzes the transport of citrate and oxoglutarate across the membrane. Also shows specificity for oxaloacetate, and to a lesser extent succinate and fumarate. Transports isocitrate, cis-aconitate and L-malate with very low efficiency. Does not show uniporter activity. Helps to maintain normal citrate levels and NADPH/NADP(+) ratios under conditions of oxidative stress. In addition, associates with the mitochondrial nucleoid and binds DNA in vitro, although the relevance of these data in vivo is unclear. This chain is Citrate/oxoglutarate carrier protein (YHM2), found in Saccharomyces cerevisiae (strain ATCC 204508 / S288c) (Baker's yeast).